The sequence spans 317 residues: Probable RuBisCO transcriptional regulator (317 aa).

Residues 6-63 form the HTH lysR-type domain; that stretch reads FTLDQLRILRAILIQGSFKKAATSLYISQPAVSSHVHNIEKQLNIQLFDRSHRNAQLT. The segment at residues 23–42 is a DNA-binding region (H-T-H motif); sequence FKKAATSLYISQPAVSSHVH.

This sequence belongs to the LysR transcriptional regulatory family.

The protein resides in the plastid. It localises to the chloroplast. Its function is as follows. Trans-acting transcriptional regulator of RuBisCO genes (rbcL and rbcS) expression. The sequence is that of Probable RuBisCO transcriptional regulator (rbcR) from Cyanidium caldarium (Red alga).